The chain runs to 189 residues: ATP synthase subunit delta (189 aa).

Belongs to the ATPase delta chain family. In terms of assembly, F-type ATPases have 2 components, F(1) - the catalytic core - and F(0) - the membrane proton channel. F(1) has five subunits: alpha(3), beta(3), gamma(1), delta(1), epsilon(1). F(0) has three main subunits: a(1), b(2) and c(10-14). The alpha and beta chains form an alternating ring which encloses part of the gamma chain. F(1) is attached to F(0) by a central stalk formed by the gamma and epsilon chains, while a peripheral stalk is formed by the delta and b chains.

It localises to the cell inner membrane. Functionally, f(1)F(0) ATP synthase produces ATP from ADP in the presence of a proton or sodium gradient. F-type ATPases consist of two structural domains, F(1) containing the extramembraneous catalytic core and F(0) containing the membrane proton channel, linked together by a central stalk and a peripheral stalk. During catalysis, ATP synthesis in the catalytic domain of F(1) is coupled via a rotary mechanism of the central stalk subunits to proton translocation. This protein is part of the stalk that links CF(0) to CF(1). It either transmits conformational changes from CF(0) to CF(1) or is implicated in proton conduction. The chain is ATP synthase subunit delta from Methylorubrum extorquens (strain PA1) (Methylobacterium extorquens).